The sequence spans 75 residues: Small ribosomal subunit protein bS18 (75 aa).

It belongs to the bacterial ribosomal protein bS18 family. As to quaternary structure, part of the 30S ribosomal subunit. Forms a tight heterodimer with protein bS6.

Functionally, binds as a heterodimer with protein bS6 to the central domain of the 16S rRNA, where it helps stabilize the platform of the 30S subunit. This chain is Small ribosomal subunit protein bS18 (rbsR), found in Rhodobacter capsulatus (strain ATCC BAA-309 / NBRC 16581 / SB1003).